Here is a 93-residue protein sequence, read N- to C-terminus: Antitoxin EndoAI (93 aa).

The protein belongs to the MazE/EndoAI family. In terms of assembly, homodimer, forms a heterohexamer composed of alternating toxin and antitoxin homodimers which inhibits the toxin's endoribonuclease activity. Antitoxin prevents RNA binding to the endoribonuclease.

Antitoxin component of a type II toxin-antitoxin (TA) system. Antitoxin that directly inhibits activity of EndoA in vitro. Upon expression in E.coli counteracts inhibitory effect of endoribonuclease EndoA. The EndoA-EndoAI complex does not seem to bind its own promoter. This chain is Antitoxin EndoAI, found in Bacillus subtilis (strain 168).